The following is a 602-amino-acid chain: Alpha-glucosides permease MPH3 (602 aa).

The Cytoplasmic portion of the chain corresponds to 1–106 (MKNLSFLINR…AAAWSLLVST (106 aa)). A helical membrane pass occupies residues 107-127 (TLIMEGYDTAILGAFYALPIF). Residues 128-142 (QRKFGSQNDKTGEWE) lie on the Extracellular side of the membrane. Residues 143–163 (ISASWQIGLTLCYMAGEIVGL) traverse the membrane as a helical segment. Over 164–178 (QLTGPSVDLVGNRYT) the chain is Cytoplasmic. Residues 179 to 199 (LIIALFFLAAFTFILYFCNSL) form a helical membrane-spanning segment. Position 200 (Gly200) is a topological domain, extracellular. Residues 201–221 (MIAVGQALCGMPWGCFQCLTV) form a helical membrane-spanning segment. At 222 to 234 (SYASEICPLALRY) the chain is on the cytoplasmic side. The chain crosses the membrane as a helical span at residues 235-255 (YLTTYSNLCWLFGQLFAAGIM). Topologically, residues 256–270 (KNSQKKYADSELGYK) are extracellular. Residues 271–291 (LPFALQWILPVPLALGIFFAP) form a helical membrane-spanning segment. Residues 292–363 (ESPWWLVKKG…EDKINRRRTR (72 aa)) lie on the Cytoplasmic side of the membrane. A helical membrane pass occupies residues 364–384 (ITCLCWAGQATCGSILIGYST). At 385-397 (YFYEKAGVSTEMS) the chain is on the extracellular side. The chain crosses the membrane as a helical span at residues 398–418 (FTFSIIQYCLGICATFLSWWA). Topologically, residues 419–426 (SKYFGRYD) are cytoplasmic. Residues 427-447 (LYAFGLAFQTIVFFIIGGLGC) form a helical membrane-spanning segment. The Extracellular segment spans residues 448 to 459 (SSTHGSKMGSGS). Residues 460 to 480 (LLMAVAFFYNLGIAPVVFCLV) form a helical membrane-spanning segment. The Cytoplasmic portion of the chain corresponds to 481-492 (SEMPSSRLRTKT). A helical transmembrane segment spans residues 493–513 (IILARNTYNVVSIICSVLILY). Over 514 to 525 (QLNSKKWNWGAK) the chain is Extracellular. The helical transmembrane segment at 526-546 (SGFFWGVLCFCTLIWAVVDLP) threads the bilayer. At 547-602 (ETAGKTFVEINELFKLGVSARKFKSTKVDPFVVKNTPKYVSHNDPKGDIEASIAEE) the chain is on the cytoplasmic side.

This sequence belongs to the major facilitator superfamily. Sugar transporter (TC 2.A.1.1) family.

The protein resides in the cell membrane. Its function is as follows. High-affinity uptake of maltose and maltotriose. Also transports alpha-methylglucoside, glucose and turanose but not melezitose or trehalose. The protein is Alpha-glucosides permease MPH3 (MPH3) of Saccharomyces cerevisiae (strain YJM789) (Baker's yeast).